The chain runs to 357 residues: Peptide chain release factor 1 (357 aa).

At Q236 the chain carries N5-methylglutamine.

The protein belongs to the prokaryotic/mitochondrial release factor family. Methylated by PrmC. Methylation increases the termination efficiency of RF1.

The protein resides in the cytoplasm. In terms of biological role, peptide chain release factor 1 directs the termination of translation in response to the peptide chain termination codons UAG and UAA. The chain is Peptide chain release factor 1 from Mycobacterium sp. (strain JLS).